We begin with the raw amino-acid sequence, 69 residues long: Putative membrane protein insertion efficiency factor (69 aa).

Belongs to the UPF0161 family.

It localises to the cell inner membrane. In terms of biological role, could be involved in insertion of integral membrane proteins into the membrane. This Aromatoleum aromaticum (strain DSM 19018 / LMG 30748 / EbN1) (Azoarcus sp. (strain EbN1)) protein is Putative membrane protein insertion efficiency factor.